Here is a 139-residue protein sequence, read N- to C-terminus: Transthyretin-like protein 5 (139 aa).

The N-terminal stretch at 1–15 (MKLIILLCLVASSYA) is a signal peptide.

This sequence belongs to the nematode transthyretin-like family.

The protein resides in the secreted. This chain is Transthyretin-like protein 5 (ttr-5), found in Caenorhabditis elegans.